The chain runs to 299 residues: GTP cyclohydrolase FolE2 (299 aa).

It belongs to the GTP cyclohydrolase IV family.

The catalysed reaction is GTP + H2O = 7,8-dihydroneopterin 3'-triphosphate + formate + H(+). Its pathway is cofactor biosynthesis; 7,8-dihydroneopterin triphosphate biosynthesis; 7,8-dihydroneopterin triphosphate from GTP: step 1/1. Converts GTP to 7,8-dihydroneopterin triphosphate. The sequence is that of GTP cyclohydrolase FolE2 from Klebsiella pneumoniae.